The chain runs to 203 residues: LexA repressor (203 aa).

The segment at residues 30-50 is a DNA-binding region (H-T-H motif); the sequence is VREICQAVSLKSTSTVHGHLK. Active-site for autocatalytic cleavage activity residues include S127 and K164.

It belongs to the peptidase S24 family. In terms of assembly, homodimer.

It carries out the reaction Hydrolysis of Ala-|-Gly bond in repressor LexA.. Represses a number of genes involved in the response to DNA damage (SOS response), including recA and lexA. In the presence of single-stranded DNA, RecA interacts with LexA causing an autocatalytic cleavage which disrupts the DNA-binding part of LexA, leading to derepression of the SOS regulon and eventually DNA repair. In Clostridium perfringens (strain SM101 / Type A), this protein is LexA repressor.